The following is a 349-amino-acid chain: Phosphoribosylformylglycinamidine cyclo-ligase (349 aa).

This sequence belongs to the AIR synthase family.

The protein resides in the cytoplasm. It catalyses the reaction 2-formamido-N(1)-(5-O-phospho-beta-D-ribosyl)acetamidine + ATP = 5-amino-1-(5-phospho-beta-D-ribosyl)imidazole + ADP + phosphate + H(+). Its pathway is purine metabolism; IMP biosynthesis via de novo pathway; 5-amino-1-(5-phospho-D-ribosyl)imidazole from N(2)-formyl-N(1)-(5-phospho-D-ribosyl)glycinamide: step 2/2. The sequence is that of Phosphoribosylformylglycinamidine cyclo-ligase from Trichlorobacter lovleyi (strain ATCC BAA-1151 / DSM 17278 / SZ) (Geobacter lovleyi).